The primary structure comprises 670 residues: Neutral ceramidase (670 aa).

An N-terminal signal peptide occupies residues 1–24 (MSRSAFTALLLSCVLLALSMPARA). Mg(2+) is bound at residue H61. N84, Q92, and D111 together coordinate substrate. H121 serves as a coordination point for Zn(2+). S130 is a substrate binding site. H228 contributes to the Zn(2+) binding site. S274 serves as the catalytic Nucleophile. A disulfide bridge links C346 with C394. Position 435 (E435) interacts with Zn(2+). Y469 contributes to the substrate binding site. Zn(2+) is bound at residue Y472. D603, D605, and T608 together coordinate Mg(2+). Residues 644 to 670 (NAKNFWTQKISEIGGSTRSFEVLGTTP) form a required for correct folding and localization region.

The protein belongs to the neutral ceramidase family. Homodimer. The cofactor is Zn(2+). Requires Mg(2+) as cofactor.

It is found in the secreted. The catalysed reaction is an N-acylsphing-4-enine + H2O = sphing-4-enine + a fatty acid. With respect to regulation, inhibited by EDTA, EGTA and D/L-sphinganine D-erythro-sphingosine. L-erythro-sphingosine is a less powerful inhibitor. Stimulated by glycerophospholipids: cardiolipin is the most effective, followed by phosphatidic acid, phosphatidylethanolamine and phosphatidylglycerol, whereas phosphatidylcholine, lysophosphatidic acid and diacylglycerol are less effective. Its function is as follows. Catalyzes the cleavage of the N-acyl linkage of the ceramides (Cers) to yield sphingosine (Sph) and free fatty acid at an optimal pH of 8-9. Also catalyzes the synthesis of Cers from Sph and fatty acid. The chain is Neutral ceramidase from Pseudomonas aeruginosa (strain ATCC 15692 / DSM 22644 / CIP 104116 / JCM 14847 / LMG 12228 / 1C / PRS 101 / PAO1).